We begin with the raw amino-acid sequence, 145 residues long: Ribosome-binding factor A (145 aa).

The interval 126-145 (RDLDTETDAEAGSETTKEED) is disordered. The span at 130–145 (TETDAEAGSETTKEED) shows a compositional bias: acidic residues.

Belongs to the RbfA family. Monomer. Binds 30S ribosomal subunits, but not 50S ribosomal subunits or 70S ribosomes.

It is found in the cytoplasm. Functionally, one of several proteins that assist in the late maturation steps of the functional core of the 30S ribosomal subunit. Associates with free 30S ribosomal subunits (but not with 30S subunits that are part of 70S ribosomes or polysomes). Required for efficient processing of 16S rRNA. May interact with the 5'-terminal helix region of 16S rRNA. This is Ribosome-binding factor A from Azorhizobium caulinodans (strain ATCC 43989 / DSM 5975 / JCM 20966 / LMG 6465 / NBRC 14845 / NCIMB 13405 / ORS 571).